A 365-amino-acid chain; its full sequence is Succinate--CoA ligase [ADP-forming] subunit beta (365 aa).

One can recognise an ATP-grasp domain in the interval 9–230; that stretch reads KEIFRAEGIS…EMEEYEPEEF (222 aa). Residues Lys-45, 52–54, Glu-90, Ile-93, and Glu-98 each bind ATP; that span reads GRG. Mg(2+) contacts are provided by Asn-190 and Asp-203. Substrate contacts are provided by residues Asn-244 and 300-302; that span reads GIT.

It belongs to the succinate/malate CoA ligase beta subunit family. As to quaternary structure, heterotetramer of two alpha and two beta subunits. Mg(2+) serves as cofactor.

It catalyses the reaction succinate + ATP + CoA = succinyl-CoA + ADP + phosphate. It carries out the reaction GTP + succinate + CoA = succinyl-CoA + GDP + phosphate. Its pathway is carbohydrate metabolism; tricarboxylic acid cycle; succinate from succinyl-CoA (ligase route): step 1/1. In terms of biological role, succinyl-CoA synthetase functions in the citric acid cycle (TCA), coupling the hydrolysis of succinyl-CoA to the synthesis of either ATP or GTP and thus represents the only step of substrate-level phosphorylation in the TCA. The beta subunit provides nucleotide specificity of the enzyme and binds the substrate succinate, while the binding sites for coenzyme A and phosphate are found in the alpha subunit. The chain is Succinate--CoA ligase [ADP-forming] subunit beta from Methanothermobacter thermautotrophicus (strain ATCC 29096 / DSM 1053 / JCM 10044 / NBRC 100330 / Delta H) (Methanobacterium thermoautotrophicum).